The chain runs to 444 residues: Trigger factor (444 aa).

The region spanning 185–270 is the PPIase FKBP-type domain; that stretch reads GDKLIIDFEG…VNEIQIAKDF (86 aa).

It belongs to the FKBP-type PPIase family. Tig subfamily.

It localises to the cytoplasm. It catalyses the reaction [protein]-peptidylproline (omega=180) = [protein]-peptidylproline (omega=0). Functionally, involved in protein export. Acts as a chaperone by maintaining the newly synthesized protein in an open conformation. Functions as a peptidyl-prolyl cis-trans isomerase. This chain is Trigger factor, found in Wolbachia pipientis wMel.